We begin with the raw amino-acid sequence, 250 residues long: MLSVPEMILYEDRVNSFGGWSKQLRPNKDTLAPAGFFYTGMGDKVKCFACGLEVIDWDPTDNPWTEHGKFSGDCLYLKMTGAIVKSKDATTTNPSTSNPFTGANNQQAVIPLTAPPPLFQQPPPPTTTSAPAVDVAPAPPTFGFNTTSTSKTTNYAFPARATAPPPITSVPKPMFGNGFVFNSSPNKQTALFGKPPGNGQDVCGNMPSTTNNSNKQQGVFGINMTGGTNQQQPTSGMFGVKPVVAQPFKF.

Residues 13–78 (RVNSFGGWSK…KFSGDCLYLK (66 aa)) form a BIR repeat.

May act as an apoptosis inhibitor. The polypeptide is Putative apoptosis inhibitor ORF99 (Ostreid herpesvirus 1 (isolate France) (OsHV-1)).